A 158-amino-acid polypeptide reads, in one-letter code: MILFVGFLLMEIVMPQISRTALVPYSAEQMYQLVNDVQSYPQFLPGCTGSRILESTPGQMTAAVDVSKAGISKTFTTRNQLTSNQSILMNLVDGPFKKLIGGWKFTPLSQEACRIEFHLDFEFTNKLIELAFGRVFKELAANMVQAFTVRAKEVYSAR.

Belongs to the ribosome association toxin RatA family. Associates with 50S ribosomes.

In terms of biological role, toxic component of a type II toxin-antitoxin (TA) system. Binds to 50S ribosomal subunits, preventing them from associating with 30S subunits to form 70S ribosomes and reducing polysomes. It does not cause ribosomes to dissociate however. The antibiotic paromomycin blocks the anti-association activity of RatA. Overexpression results in inhibition of growth in liquid cultures, and in a decrease in protein translation. The other gene of this operon, ratB, is not the cognate antitoxin in this strain; in CFT073 however it does fulfill this function. Functionally, low level expression in a deletion mutant increases resistance to acidified sodium nitrate which causes nitrosative stress. This chain is Ribosome association toxin RatA (ratA), found in Escherichia coli (strain K12).